Consider the following 530-residue polypeptide: Type 2 DNA topoisomerase 6 subunit B (530 aa).

ATP is bound by residues Asn42, Asp76, 97-98, 106-113, and Lys427; these read SK and GMYGLGVK.

The protein belongs to the TOP6B family. In terms of assembly, homodimer. Heterotetramer of two Top6A and two Top6B chains.

The catalysed reaction is ATP-dependent breakage, passage and rejoining of double-stranded DNA.. Functionally, relaxes both positive and negative superturns and exhibits a strong decatenase activity. This chain is Type 2 DNA topoisomerase 6 subunit B, found in Saccharolobus islandicus (strain Y.N.15.51 / Yellowstone #2) (Sulfolobus islandicus).